We begin with the raw amino-acid sequence, 168 residues long: uncharacterized protein (168 aa).

Residues 24–44 traverse the membrane as a helical segment; that stretch reads FIGIVLFLAVLIIGILILILF. 2 disordered regions span residues 69–92 and 142–168; these read SPSSSFLINNNNNNNNYHQNNNSN and NNNNNNNNNPPTNISNKLNKNGETKNI. The segment covering 142–157 has biased composition (low complexity); that stretch reads NNNNNNNNNPPTNISN.

It is found in the membrane. This is an uncharacterized protein from Dictyostelium discoideum (Social amoeba).